We begin with the raw amino-acid sequence, 600 residues long: Alpha-N-acetylgalactosaminide alpha-2,6-sialyltransferase 1 (600 aa).

The Cytoplasmic segment spans residues 1-14 (MRSCLWRCRHLSQG). A helical; Signal-anchor for type II membrane protein transmembrane segment spans residues 15 to 35 (VQWSLLLAVLVFFLFALPSFI). The Lumenal segment spans residues 36–600 (KEPQTKPSRH…PGPGTAKAKN (565 aa)). Disordered regions lie at residues 38-191 (PQTK…AATT) and 208-248 (GAVS…TQRN). The segment covering 46-55 (QRTENIKERS) has biased composition (basic and acidic residues). 3 stretches are compositionally biased toward polar residues: residues 84–94 (NALNTQTQPKA), 151–179 (TEAQ…ASRT), and 209–219 (AVSTRTRQKGV). 2 cysteine pairs are disulfide-bonded: C279/C362 and C365/C533. Residues N300, N311, N331, N375, and N460 are each glycosylated (N-linked (GlcNAc...) asparagine).

This sequence belongs to the glycosyltransferase 29 family. In terms of processing, glycosylated; autosialylated. As to expression, expression is restricted to the gastrointestinal tract. Highly expressed in goblet cells. Also expressed in various tumor cells.

It is found in the golgi apparatus membrane. It carries out the reaction a beta-D-galactosyl-(1-&gt;3)-N-acetyl-alpha-D-galactosaminyl derivative + CMP-N-acetyl-beta-neuraminate = a beta-D-galactosyl-(1-&gt;3)-[N-acetyl-alpha-neuraminyl-(2-&gt;6)]-N-acetyl-alpha-D-galactosaminyl derivative + CMP + H(+). It catalyses the reaction a 3-O-[N-acetyl-alpha-D-galactosaminyl]-L-seryl-[protein] + CMP-N-acetyl-beta-neuraminate = a 3-O-[N-acetyl-alpha-neuraminosyl-(2-&gt;6)-N-acetyl-alpha-D-galactosaminyl]-L-seryl-[protein] + CMP + H(+). The catalysed reaction is a 3-O-[N-acetyl-alpha-D-galactosaminyl]-L-threonyl-[protein] + CMP-N-acetyl-beta-neuraminate = a 3-O-[N-acetyl-alpha-neuraminosyl-(2-&gt;6)-N-acetyl-alpha-D-galactosaminyl]-L-threonyl-[protein] + CMP + H(+). The enzyme catalyses a 3-O-[beta-D-galactosyl-(1-&gt;3)-N-acetyl-alpha-D-galactosaminyl]-L-seryl-[protein] + CMP-N-acetyl-beta-neuraminate = a 3-O-{beta-D-galactosyl-(1-&gt;3)-[N-acetyl-alpha-neuraminosyl-(2-&gt;6)]-N-acetyl-alpha-D-galactosaminyl}-L-seryl-[protein] + CMP + H(+). It carries out the reaction a 3-O-[beta-D-galactosyl-(1-&gt;3)-N-acetyl-alpha-D-galactosaminyl]-L-threonyl-[protein] + CMP-N-acetyl-beta-neuraminate = a 3-O-{beta-D-galactosyl-(1-&gt;3)-[N-acetyl-alpha-neuraminosyl-(2-&gt;6)]-N-acetyl-alpha-D-galactosaminyl}-L-threonyl-[protein] + CMP + H(+). It catalyses the reaction a 3-O-[N-acetyl-alpha-neuraminyl-(2-&gt;3)-beta-D-galactosyl-(1-&gt;3)-N-acetyl-alpha-D-galactosaminyl]-L-threonyl-[protein] + CMP-N-acetyl-beta-neuraminate = a 3-O-{alpha-Neu5Ac-(2-&gt;3)-beta-D-Gal-(1-&gt;3)-[alpha-Neu5Ac-(2-&gt;6)]-alpha-D-GalNAc}-L-threonyl-[protein] + CMP + H(+). It participates in protein modification; protein glycosylation. In terms of biological role, protein sialyltransferase specifically expressed in goblet cells that plays a key role in intestinal host-commensal homeostasis. Conjugates sialic acid with an alpha-2-6 linkage to N-acetylgalactosamine (GalNAc) glycan chains linked to serine or threonine in glycoproteins. Catalyzes the formation of the sialyl-Tn (S-Tn) antigen, an antigen found in intestinal goblet cells, as well as ulcerative colitis (UC) and various cancers. Protein sialylation in globlet cells is essential for mucus integrity and is required to protect the intestinal mucus against excessive bacterial proteolytic degradation. The chain is Alpha-N-acetylgalactosaminide alpha-2,6-sialyltransferase 1 from Homo sapiens (Human).